Reading from the N-terminus, the 398-residue chain is S-adenosylmethionine synthase (398 aa).

His16 lines the ATP pocket. Asp18 provides a ligand contact to Mg(2+). Residue Glu44 participates in K(+) binding. L-methionine is bound by residues Glu57 and Gln100. Residues 100 to 110 (QSPDIAQGVNE) are flexible loop. ATP-binding positions include 175 to 177 (DAK), 242 to 243 (RF), Asp251, 257 to 258 (RK), Ala274, and Lys278. Asp251 contributes to the L-methionine binding site. L-methionine is bound at residue Lys282.

The protein belongs to the AdoMet synthase family. In terms of assembly, homotetramer; dimer of dimers. Mg(2+) serves as cofactor. K(+) is required as a cofactor.

The protein resides in the cytoplasm. The enzyme catalyses L-methionine + ATP + H2O = S-adenosyl-L-methionine + phosphate + diphosphate. It participates in amino-acid biosynthesis; S-adenosyl-L-methionine biosynthesis; S-adenosyl-L-methionine from L-methionine: step 1/1. In terms of biological role, catalyzes the formation of S-adenosylmethionine (AdoMet) from methionine and ATP. The overall synthetic reaction is composed of two sequential steps, AdoMet formation and the subsequent tripolyphosphate hydrolysis which occurs prior to release of AdoMet from the enzyme. This is S-adenosylmethionine synthase from Streptococcus agalactiae serotype Ia (strain ATCC 27591 / A909 / CDC SS700).